The primary structure comprises 268 residues: MEAPKHVNNACVIPNLTLKKMREIELDFPSKKIQEKIATILDTFTELSAELRERKKQYAFYRDYLLNQENIRKIYGANIPFETFQVKDICEIRRGRAITKAYIRNNPGENPVYSAATTNDGELGRIKDCDFDGEYITWTTNGYAGVVFYRNGKFNASQDCGVLKVKNKKICTKFLSFLLKIEAPKFVHNLASRPKLSQKVMAEIELSFPPLEIQEKIADILFAFEKLCNDLVEGIPAEVEMRKKQLDYYQNFLFNWVQEQKTQLEQIM.

This sequence belongs to the type-I restriction system S methylase family. In terms of assembly, the methyltransferase is composed of M and S polypeptides.

The specificity (S) subunit of a type I methyltransferase (MTase); this subunit dictates DNA sequence specificity. The single R subunit has multiple frameshifts and is probably not expressed. This is Putative type I specificity subunit S.MpnORF365P from Mycoplasma pneumoniae (strain ATCC 29342 / M129 / Subtype 1) (Mycoplasmoides pneumoniae).